The following is a 44-amino-acid chain: Protein Tat (44 aa).

The tract at residues 1 to 44 is disordered; the sequence is APEDSQSHQVSLSKQPASQAGGDPTGPKESKKKVESETETDPVP. A compositionally biased stretch (polar residues) spans 7–18; the sequence is SHQVSLSKQPAS. Residue K14 forms a Glycyl lysine isopeptide (Lys-Gly) (interchain with G-Cter in ubiquitin) linkage. A Cell attachment site motif is present at residues 21–23; it reads GGD. Basic and acidic residues predominate over residues 26 to 36; the sequence is GPKESKKKVES.

Belongs to the lentiviruses Tat family. As to quaternary structure, interacts with host CCNT1. Associates with the P-TEFb complex composed at least of Tat, P-TEFb (CDK9 and CCNT1), TAR RNA, RNA Pol II. Recruits the HATs CREBBP, TAF1/TFIID, EP300, PCAF and GCN5L2. Interacts with host KAT5/Tip60; this interaction targets the latter to degradation. Interacts with the host deacetylase SIRT1. Interacts with host capping enzyme RNGTT; this interaction stimulates RNGTT. Binds to host KDR, and to the host integrins ITGAV/ITGB3 and ITGA5/ITGB1. Interacts with host KPNB1/importin beta-1 without previous binding to KPNA1/importin alpha-1. Interacts with EIF2AK2. Interacts with host nucleosome assembly protein NAP1L1; this interaction may be required for the transport of Tat within the nucleus, since the two proteins interact at the nuclear rim. Interacts with host C1QBP/SF2P32; this interaction involves lysine-acetylated Tat. Interacts with the host chemokine receptors CCR2, CCR3 and CXCR4. Interacts with host DPP4/CD26; this interaction may trigger an anti-proliferative effect. Interacts with host LDLR. Interacts with the host extracellular matrix metalloproteinase MMP1. Interacts with host PRMT6; this interaction mediates Tat's methylation. Interacts with, and is ubiquitinated by MDM2/Hdm2. Interacts with host PSMC3 and HTATIP2. Interacts with STAB1; this interaction may overcome SATB1-mediated repression of IL2 and IL2RA (interleukin) in T cells by binding to the same domain than HDAC1. Interacts (when acetylated) with human CDK13, thereby increasing HIV-1 mRNA splicing and promoting the production of the doubly spliced HIV-1 protein Nef. In terms of processing, acetylation by EP300, CREBBP, GCN5L2/GCN5 and PCAF regulates the transactivation activity of Tat. Post-translationally, phosphorylated by EIF2AK2 on serine and threonine residues adjacent to the basic region important for TAR RNA binding and function. Phosphorylation of Tat by EIF2AK2 is dependent on the prior activation of EIF2AK2 by dsRNA. Asymmetrical arginine methylation by host PRMT6 seems to diminish the transactivation capacity of Tat and affects the interaction with host CCNT1. In terms of processing, polyubiquitination by MDM2 does not target Tat to degradation, but activates its transactivation function and fosters interaction with CCNT1 and TAR RNA.

The protein localises to the host nucleus. It is found in the host nucleolus. Its subcellular location is the host cytoplasm. The protein resides in the secreted. Transcriptional activator that increases RNA Pol II processivity, thereby increasing the level of full-length viral transcripts. Recognizes a hairpin structure at the 5'-LTR of the nascent viral mRNAs referred to as the transactivation responsive RNA element (TAR) and recruits the cyclin T1-CDK9 complex (P-TEFb complex) that will in turn hyperphosphorylate the RNA polymerase II to allow efficient elongation. The CDK9 component of P-TEFb and other Tat-activated kinases hyperphosphorylate the C-terminus of RNA Pol II that becomes stabilized and much more processive. Other factors such as HTATSF1/Tat-SF1, SUPT5H/SPT5, and HTATIP2 are also important for Tat's function. Besides its effect on RNA Pol II processivity, Tat induces chromatin remodeling of proviral genes by recruiting the histone acetyltransferases (HATs) CREBBP, EP300 and PCAF to the chromatin. This also contributes to the increase in proviral transcription rate, especially when the provirus integrates in transcriptionally silent region of the host genome. To ensure maximal activation of the LTR, Tat mediates nuclear translocation of NF-kappa-B by interacting with host RELA. Through its interaction with host TBP, Tat may also modulate transcription initiation. Tat can reactivate a latently infected cell by penetrating in it and transactivating its LTR promoter. In the cytoplasm, Tat is thought to act as a translational activator of HIV-1 mRNAs. Its function is as follows. Extracellular circulating Tat can be endocytosed by surrounding uninfected cells via the binding to several surface receptors such as CD26, CXCR4, heparan sulfate proteoglycans (HSPG) or LDLR. Neurons are rarely infected, but they internalize Tat via their LDLR. Endosomal low pH allows Tat to cross the endosome membrane to enter the cytosol and eventually further translocate into the nucleus, thereby inducing severe cell dysfunctions ranging from cell activation to cell death. Through its interaction with nuclear HATs, Tat is potentially able to control the acetylation-dependent cellular gene expression. Tat seems to inhibit the HAT activity of KAT5/Tip60 and TAF1, and consequently modify the expression of specific cellular genes. Modulates the expression of many cellular genes involved in cell survival, proliferation or in coding for cytokines (such as IL10) or cytokine receptors. May be involved in the derepression of host interleukin IL2 expression. Mediates the activation of cyclin-dependent kinases and dysregulation of microtubule network. Tat plays a role in T-cell and neurons apoptosis. Tat induced neurotoxicity and apoptosis probably contribute to neuroAIDS. Host extracellular matrix metalloproteinase MMP1 cleaves Tat and decreases Tat's mediated neurotoxicity. Circulating Tat also acts as a chemokine-like and/or growth factor-like molecule that binds to specific receptors on the surface of the cells, affecting many cellular pathways. In the vascular system, Tat binds to ITGAV/ITGB3 and ITGA5/ITGB1 integrins dimers at the surface of endothelial cells and competes with bFGF for heparin-binding sites, leading to an excess of soluble bFGF. Binds to KDR/VEGFR-2. All these Tat-mediated effects enhance angiogenesis in Kaposi's sarcoma lesions. This chain is Protein Tat, found in Human immunodeficiency virus type 1 group M subtype B (isolate BRVA) (HIV-1).